We begin with the raw amino-acid sequence, 86 residues long: Weak neurotoxin 10 (86 aa).

Positions 1–21 are cleaved as a signal peptide; it reads MKTLLLTLVVVTIVCLDLGYT. 5 disulfides stabilise this stretch: C24–C45, C27–C32, C38–C63, C67–C78, and C79–C84.

It belongs to the three-finger toxin family. Ancestral subfamily. Orphan group II sub-subfamily. In terms of tissue distribution, expressed by the venom gland.

The protein localises to the secreted. Binds with low affinity to muscular (alpha-1-beta-1-delta-epsilon/CHRNA1-CHRNB1-CHRND-CHRNE) and very low affinity to neuronal (alpha-7/CHRNA7) nicotinic acetylcholine receptor (nAChR). In Naja sputatrix (Malayan spitting cobra), this protein is Weak neurotoxin 10 (WNTX10).